We begin with the raw amino-acid sequence, 274 residues long: NADPH-dependent 7-cyano-7-deazaguanine reductase (274 aa).

80–82 (VES) contacts substrate. 82 to 83 (SK) is a binding site for NADPH. The Thioimide intermediate role is filled by C181. Residue D188 is the Proton donor of the active site. 220 to 221 (HE) lines the substrate pocket. 249–250 (RG) contacts NADPH.

This sequence belongs to the GTP cyclohydrolase I family. QueF type 2 subfamily. In terms of assembly, homodimer.

It localises to the cytoplasm. It catalyses the reaction 7-aminomethyl-7-carbaguanine + 2 NADP(+) = 7-cyano-7-deazaguanine + 2 NADPH + 3 H(+). It participates in tRNA modification; tRNA-queuosine biosynthesis. In terms of biological role, catalyzes the NADPH-dependent reduction of 7-cyano-7-deazaguanine (preQ0) to 7-aminomethyl-7-deazaguanine (preQ1). The chain is NADPH-dependent 7-cyano-7-deazaguanine reductase from Burkholderia multivorans (strain ATCC 17616 / 249).